Consider the following 128-residue polypeptide: MEQYYGTGRRKEAVARVFLRPGNGKVTVNGQDFNEYFQGLVRAVAALEPLRAVDALGRFDAYITVRGGGKSGQIDAIKLGIARALVQYNPDYRAKLKPLGFLTRDARVVERKKYGKHKARRAPQYSKR.

This sequence belongs to the universal ribosomal protein uS9 family. Part of the 30S ribosomal subunit. Contacts proteins S7 and S10.

Its function is as follows. Part of the top of the head of the 30S subunit. The C-terminal region penetrates the head emerging in the P-site where it contacts tRNA. This chain is Small ribosomal subunit protein uS9 (rpsI), found in Thermus thermophilus (strain ATCC BAA-163 / DSM 7039 / HB27).